The primary structure comprises 340 residues: Adenosine deaminase-like protein (340 aa).

Residues histidine 14 and histidine 16 each coordinate Zn(2+). N(6)-methyl-AMP is bound by residues histidine 16, asparagine 18, histidine 68, 100–103 (TTPK), and glycine 173. Histidine 200 lines the Zn(2+) pocket. Glutamate 203, aspartate 278, and aspartate 279 together coordinate N(6)-methyl-AMP. Residue glutamate 203 is the Proton donor of the active site. Position 278 (aspartate 278) interacts with Zn(2+).

Belongs to the metallo-dependent hydrolases superfamily. Adenosine and AMP deaminases family. As to quaternary structure, monomer. It depends on Zn(2+) as a cofactor.

It catalyses the reaction N(6)-methyl-AMP + H2O + H(+) = IMP + methylamine. Its function is as follows. Catalyzes the hydrolysis of the free cytosolic methylated adenosine nucleotide N(6)-methyl-AMP (N6-mAMP) to produce inositol monophosphate (IMP) and methylamine. Is required for the catabolism of cytosolic N6-mAMP, which is derived from the degradation of mRNA containing N6-methylated adenine (m6A). The polypeptide is Adenosine deaminase-like protein (Drosophila pseudoobscura pseudoobscura (Fruit fly)).